The chain runs to 140 residues: Probable disulfide formation protein C 2 (140 aa).

Residues 6–25 traverse the membrane as a helical segment; that stretch reads KYHIAIAWTIATSAMLISLI. An intrachain disulfide couples Cys35 to Cys38. The next 2 helical transmembrane spans lie at 40–59 and 66–83; these read YQRM…MYRK and YAFP…YQIT. Residues Cys95 and Cys101 are joined by a disulfide bond. The helical transmembrane segment at 110–134 threads the bilayer; that stretch reads GFISIPMLSFVGFLAIIILLYINQI.

This sequence belongs to the DsbB family. BdbC subfamily.

It is found in the cell membrane. Functionally, required for disulfide bond formation in some proteins. This is Probable disulfide formation protein C 2 (bdbC2) from Bacillus anthracis.